The following is a 361-amino-acid chain: Histidine biosynthesis bifunctional protein HisB (361 aa).

The interval 1-172 (MSQPTLFIDR…PKTTACERPP (172 aa)) is histidinol-phosphatase. Asp9 acts as the Nucleophile in catalysis. Residues Asp9 and Asp11 each coordinate Mg(2+). The active-site Proton donor is the Asp11. Positions 92, 94, 100, and 102 each coordinate Zn(2+). Asp129 is a binding site for Mg(2+). The interval 173-361 (RYAEVVRTTK…NELPSSKGVL (189 aa)) is imidazoleglycerol-phosphate dehydratase.

In the N-terminal section; belongs to the histidinol-phosphatase family. The protein in the C-terminal section; belongs to the imidazoleglycerol-phosphate dehydratase family. Mg(2+) serves as cofactor. Zn(2+) is required as a cofactor.

It is found in the cytoplasm. The catalysed reaction is D-erythro-1-(imidazol-4-yl)glycerol 3-phosphate = 3-(imidazol-4-yl)-2-oxopropyl phosphate + H2O. It carries out the reaction L-histidinol phosphate + H2O = L-histidinol + phosphate. It functions in the pathway amino-acid biosynthesis; L-histidine biosynthesis; L-histidine from 5-phospho-alpha-D-ribose 1-diphosphate: step 6/9. Its pathway is amino-acid biosynthesis; L-histidine biosynthesis; L-histidine from 5-phospho-alpha-D-ribose 1-diphosphate: step 8/9. In Actinobacillus pleuropneumoniae serotype 7 (strain AP76), this protein is Histidine biosynthesis bifunctional protein HisB.